We begin with the raw amino-acid sequence, 573 residues long: 60 kDa heat shock protein, mitochondrial (573 aa).

Residues 1-26 (MLRLPTVLRQMRPVSRALAPHLTRAY) constitute a mitochondrion transit peptide. The residue at position 31 (Lys31) is an N6-succinyllysine. Phosphoserine is present on residues Ser67 and Ser70. Lys75 is an ATP binding site. Residue Lys75 is modified to N6-acetyllysine. Residue Lys82 is modified to N6-acetyllysine; alternate. Lys82 bears the N6-succinyllysine; alternate mark. N6-acetyllysine is present on Lys87. The residue at position 90 (Tyr90) is a Phosphotyrosine. Lys91 is modified (N6-acetyllysine). 111 to 115 (DGTTT) provides a ligand contact to ATP. Lys125 is subject to N6-acetyllysine; alternate. Lys125 carries the post-translational modification N6-succinyllysine; alternate. Lys130 is modified (N6-acetyllysine). Position 133 is an N6-acetyllysine; alternate (Lys133). Position 133 is an N6-succinyllysine; alternate (Lys133). Residue Lys133 is modified to N6-malonyllysine; alternate. Lys156 bears the N6-acetyllysine mark. 5 positions are modified to N6-acetyllysine; alternate: Lys191, Lys202, Lys205, Lys218, and Lys236. N6-succinyllysine; alternate is present on residues Lys191, Lys202, Lys205, Lys218, and Lys236. Residue Lys249 is modified to N6-acetyllysine. An N6-acetyllysine; alternate modification is found at Lys250. N6-succinyllysine; alternate is present on Lys250. Residues Lys269 and Lys292 each carry the N6-acetyllysine modification. Lys301 bears the N6-succinyllysine mark. Residue Lys314 is modified to N6-acetyllysine. Lys352 is modified (N6-acetyllysine; alternate). Lys352 is modified (N6-succinyllysine; alternate). N6-acetyllysine occurs at positions 359 and 389. Lys396 is subject to N6-acetyllysine; alternate. Lys396 bears the N6-succinyllysine; alternate mark. Ser410 carries the phosphoserine modification. Gly440 serves as a coordination point for ATP. Position 455 is an N6-acetyllysine; alternate (Lys455). The residue at position 455 (Lys455) is an N6-succinyllysine; alternate. N6-acetyllysine is present on Lys469. N6-acetyllysine; alternate is present on Lys481. Lys481 carries the N6-succinyllysine; alternate modification. Position 488 is a phosphoserine (Ser488). Asp520 is a binding site for ATP. Lys551 is covalently cross-linked (Glycyl lysine isopeptide (Lys-Gly) (interchain with G-Cter in SUMO2)).

This sequence belongs to the chaperonin (HSP60) family. In terms of assembly, homoheptamer arranged in a ring structure. The functional units of these chaperonins consist of heptameric rings of the large subunit Hsp60, which function as a back-to-back double ring. Interacts with 2 heptameric Hsp10 rings to form the symmetrical football complex. Interacts with HRAS. Interacts with ATAD3A. Interacts with ETFBKMT and EEF1AKMT3. Interacts with MFHAS1.

It localises to the mitochondrion matrix. It carries out the reaction ATP + H2O + a folded polypeptide = ADP + phosphate + an unfolded polypeptide.. Its function is as follows. Chaperonin implicated in mitochondrial protein import and macromolecular assembly. Together with Hsp10, facilitates the correct folding of imported proteins. May also prevent misfolding and promote the refolding and proper assembly of unfolded polypeptides generated under stress conditions in the mitochondrial matrix. The functional units of these chaperonins consist of heptameric rings of the large subunit Hsp60, which function as a back-to-back double ring. In a cyclic reaction, Hsp60 ring complexes bind one unfolded substrate protein per ring, followed by the binding of ATP and association with 2 heptameric rings of the co-chaperonin Hsp10. This leads to sequestration of the substrate protein in the inner cavity of Hsp60 where, for a certain period of time, it can fold undisturbed by other cell components. Synchronous hydrolysis of ATP in all Hsp60 subunits results in the dissociation of the chaperonin rings and the release of ADP and the folded substrate protein. In Cricetulus griseus (Chinese hamster), this protein is 60 kDa heat shock protein, mitochondrial (HSPD1).